Consider the following 327-residue polypeptide: tRNA N6-adenosine threonylcarbamoyltransferase (327 aa).

2 residues coordinate Fe cation: His109 and His113. Residues 132-136, Asp165, Gly178, Asp182, and Asn268 each bind substrate; that span reads MVSGG. Residue Asp296 coordinates Fe cation.

Belongs to the KAE1 / TsaD family. Fe(2+) is required as a cofactor.

Its subcellular location is the cytoplasm. The catalysed reaction is L-threonylcarbamoyladenylate + adenosine(37) in tRNA = N(6)-L-threonylcarbamoyladenosine(37) in tRNA + AMP + H(+). Functionally, required for the formation of a threonylcarbamoyl group on adenosine at position 37 (t(6)A37) in tRNAs that read codons beginning with adenine. Is involved in the transfer of the threonylcarbamoyl moiety of threonylcarbamoyl-AMP (TC-AMP) to the N6 group of A37, together with TsaE and TsaB. TsaD likely plays a direct catalytic role in this reaction. This Thermotoga neapolitana (strain ATCC 49049 / DSM 4359 / NBRC 107923 / NS-E) protein is tRNA N6-adenosine threonylcarbamoyltransferase.